A 273-amino-acid polypeptide reads, in one-letter code: L-fucose dehydrogenase (273 aa).

12 residues coordinate NAD(+): Arg19, Ile21, Asp40, Lys41, Asp62, Val63, Asn89, Tyr154, Lys158, Ile187, Thr189, and Leu191. Tyr154 functions as the Proton acceptor in the catalytic mechanism.

The protein belongs to the short-chain dehydrogenases/reductases (SDR) family. As to quaternary structure, homotetramer.

It is found in the cytoplasm. It carries out the reaction L-fucose + NAD(+) = L-fucono-1,5-lactone + NADH + H(+). The catalysed reaction is D-arabinose + NAD(+) = D-arabinono-1,5-lactone + NADH + H(+). It catalyses the reaction L-galactose + NAD(+) = L-galactono-1,5-lactone + NADH + H(+). The protein operates within carbohydrate degradation; L-fucose degradation. Its function is as follows. Catalyzes the NAD(+)-dependent oxidation of L-fucose, yielding L-fucono-1,5-lactone, which rapidly converts spontaneously to L-fucone-1,4-lactone. Can also act on D-arabinose and L-galactose, with lower catalytic efficiency. Does not use NADPH. May be the initial enzyme of the putative L-fucose degradation pathway in mammals. The polypeptide is L-fucose dehydrogenase (Mus musculus (Mouse)).